We begin with the raw amino-acid sequence, 196 residues long: MEIDILHFEKKYPNFILAGIDEAGRGPLAGPVVAAAVIVDQNNIIAGIKDSKKLSKKKRELLYEQITANYIWATGIISHTEIDKINILEATKKACILAAENLSTKPEIVLVDGNMQFSDKRFISIINGDNLSLSIAAASIIAKVTRDRLMLELSNEFPQYLWHKNSGYGTKEHAQAIKEYGLSPYHRLSFTKALYK.

The region spanning 15 to 196 is the RNase H type-2 domain; that stretch reads FILAGIDEAG…RLSFTKALYK (182 aa). 3 residues coordinate a divalent metal cation: aspartate 21, glutamate 22, and aspartate 112.

Belongs to the RNase HII family. Mn(2+) serves as cofactor. It depends on Mg(2+) as a cofactor.

Its subcellular location is the cytoplasm. The enzyme catalyses Endonucleolytic cleavage to 5'-phosphomonoester.. Its function is as follows. Endonuclease that specifically degrades the RNA of RNA-DNA hybrids. This chain is Ribonuclease HII, found in Rickettsia bellii (strain OSU 85-389).